The chain runs to 307 residues: MAEISDLDRQIEQLLRCELIKESEVKALCAKAREILVEESNVQRVDSPVTVCGDIHGQFYDLKELFRVGGDVPETNYLFMGDFVDRGFYSVETFLLLLALKVRYPDRITLIRGNHESRQITQVYGFYDECLRKYGSVTVWRYCTEIFDYLSLSAIIDGKIFCVHGGLSPSIQTLDQIRTIDRKQEVPHDGPMCDLLWSDPEDTTGWGVSPRGAGYLFGSDVVAQFNAANDIDMICRAHQLVMEGYKWHFNETVLTVWSAPNYCYRCGNVAAILELDEHLQKDFIIFEAAPQETRGIPSKKPVADYFL.

An N-acetylalanine modification is found at alanine 2. Positions 54, 56, 82, and 114 each coordinate Mn(2+). Residue histidine 115 is the Proton donor of the active site. Mn(2+) contacts are provided by histidine 164 and histidine 238. Leucine 307 carries the post-translational modification Leucine methyl ester.

Belongs to the PPP phosphatase family. PP-4 (PP-X) subfamily. In terms of assembly, serine/threonine-protein phosphatase 4 (PP4) occurs in different assemblies of the catalytic and one or more regulatory subunits. Component of the PP4 complexes PPP4C-PPP4R1, PPP4C-PPP4R2, PPP4C-PPP4R2-PPP4R3A, PPP4C-PPP4R2-PPP4R3B and PPP4C-PPP4R4. The PPP4C-PPP4R2 complex appears to be a tetramer composed of 2 molecules of PPP4C and 2 molecules of PPP4R2. Interacts with REL, NFKB1/p50 and RELA. Interacts with SMN1 and GEMIN4. Interacts with IRS4 (phosphorylated). Interacts with SMEK1/PPP4R3A; the interaction requires PP4R2. Interacts with HDAC3. Requires Mn(2+) as cofactor. Methylation at the C-terminal Leu-307 is critical for interactions with regulatory subunits and functions in DNA repair.

It localises to the cytoplasm. The protein resides in the nucleus. The protein localises to the cytoskeleton. Its subcellular location is the microtubule organizing center. It is found in the centrosome. The enzyme catalyses O-phospho-L-seryl-[protein] + H2O = L-seryl-[protein] + phosphate. It catalyses the reaction O-phospho-L-threonyl-[protein] + H2O = L-threonyl-[protein] + phosphate. Functionally, protein phosphatase that is involved in many processes such as microtubule organization at centrosomes, maturation of spliceosomal snRNPs, apoptosis, DNA repair, tumor necrosis factor (TNF)-alpha signaling, activation of c-Jun N-terminal kinase MAPK8, regulation of histone acetylation, DNA damage checkpoint signaling, NF-kappa-B activation and cell migration. The PPP4C-PPP4R1 PP4 complex may play a role in dephosphorylation and regulation of HDAC3. The PPP4C-PPP4R2-PPP4R3A PP4 complex specifically dephosphorylates H2AX phosphorylated on Ser-140 (gamma-H2AX) generated during DNA replication and required for DNA DSB repair. Dephosphorylates NDEL1 at CDK1 phosphorylation sites and negatively regulates CDK1 activity in interphase. In response to DNA damage, catalyzes RPA2 dephosphorylation, an essential step for DNA repair since it allows the efficient RPA2-mediated recruitment of RAD51 to chromatin. The sequence is that of Serine/threonine-protein phosphatase 4 catalytic subunit (PPP4C) from Oryctolagus cuniculus (Rabbit).